A 436-amino-acid polypeptide reads, in one-letter code: GTPase Der (436 aa).

2 EngA-type G domains span residues 4-167 and 176-351; these read SVVA…PNES and IYFS…ESHT. Residues 10-17, 57-61, 119-122, 182-189, 229-233, and 294-297 each bind GTP; these read GRPNVGKS, DTGGI, NKMD, DTAGM, and NKWD. In terms of domain architecture, KH-like spans 352 to 436; that stretch reads KRIPTNVLND…PIKLFARRRQ (85 aa).

It belongs to the TRAFAC class TrmE-Era-EngA-EngB-Septin-like GTPase superfamily. EngA (Der) GTPase family. Associates with the 50S ribosomal subunit.

Its function is as follows. GTPase that plays an essential role in the late steps of ribosome biogenesis. The polypeptide is GTPase Der (Oceanobacillus iheyensis (strain DSM 14371 / CIP 107618 / JCM 11309 / KCTC 3954 / HTE831)).